The following is a 522-amino-acid chain: Serine/threonine protein phosphatase 2A 59 kDa regulatory subunit B' gamma isoform (522 aa).

Residues 1–74 (MIKQIFGKLP…SSTSSNRTNQ (74 aa)) form a disordered region. The span at 35-58 (PNSGISSISKPSSKSSASNSNGAN) shows a compositional bias: low complexity. The segment covering 63–74 (APSSTSSNRTNQ) has biased composition (polar residues).

It belongs to the phosphatase 2A regulatory subunit B56 family. In terms of assembly, PP2A consists of a common heteromeric enzyme, composed of a catalytic subunit (subunits C), a constant regulatory subunit (subunit A), and a variety of regulatory subunits such as subunits B (the R2/B/PR55/B55, R3/B''/PR72/PR130/PR59 and R5/B'/B56 families). Interacts with BRI1. Interacts with IGMT1 and IGMT4. Interacts with ACO3 in the cytosol. As to expression, expressed ubiquitously at low levels. Expressed in roots, emerging lateral roots, cotyledons, leaves, floral stalks and flowers.

The protein localises to the cytoplasm. Its subcellular location is the cytosol. It is found in the nucleus. In terms of biological role, the B regulatory subunit may modulate substrate selectivity and catalytic activity, and may also direct the localization of the catalytic enzyme to a particular subcellular compartment. Required for the formation of the PP2A holoenzyme that negatively regulates brassinosteroid signaling by dephosphorylating and inactivating BRI1 in the cytoplasm. Seems to be functionally connected with CPR5 and may mediate the negative regulation of defense reactions and senescence under low irradiances. May contribute to the epigenetic regulation of defense gene expression. Involved in the control of methoxylation of indole glucosinolates and formation of 4-methoxy- indol-3-yl-methyl glucosinolate in leaves, through direct interaction with indole glucosinolate methyltransferases. Involved in growth regulation and stress signaling. Involved in the regulation of reactive oxygen species (ROS) signaling and maintenance of cellular ROS homeostasis. Required to control the level of ACO3 phosphorylation in the cytoplasm. Regulates hydrogen peroxide metabolism by controlling the abundance of AOX1A and AXO3/AOX1D in leaf mitochondria. May mediate dephosphorylation of CRT1 and promote the degradation of unfolded proteins in endoplasmic reticulum (ER). Involved in the regulation of flowering time by repressing FLC, the main flowering repressor gene. In Arabidopsis thaliana (Mouse-ear cress), this protein is Serine/threonine protein phosphatase 2A 59 kDa regulatory subunit B' gamma isoform (B'GAMMA).